The primary structure comprises 412 residues: ATP phosphoribosyltransferase regulatory subunit (412 aa).

The protein belongs to the class-II aminoacyl-tRNA synthetase family. HisZ subfamily. As to quaternary structure, heteromultimer composed of HisG and HisZ subunits.

Its subcellular location is the cytoplasm. Its pathway is amino-acid biosynthesis; L-histidine biosynthesis; L-histidine from 5-phospho-alpha-D-ribose 1-diphosphate: step 1/9. Required for the first step of histidine biosynthesis. May allow the feedback regulation of ATP phosphoribosyltransferase activity by histidine. The sequence is that of ATP phosphoribosyltransferase regulatory subunit from Dehalococcoides mccartyi (strain ATCC BAA-2100 / JCM 16839 / KCTC 5957 / BAV1).